The chain runs to 274 residues: Orotidine 5'-phosphate decarboxylase (274 aa).

Residue Lys95 is the Proton donor of the active site.

Belongs to the OMP decarboxylase family. Type 2 subfamily.

The catalysed reaction is orotidine 5'-phosphate + H(+) = UMP + CO2. It participates in pyrimidine metabolism; UMP biosynthesis via de novo pathway; UMP from orotate: step 2/2. The protein is Orotidine 5'-phosphate decarboxylase of Variovorax paradoxus (strain S110).